The sequence spans 451 residues: Chromosomal replication initiator protein DnaA (451 aa).

A domain I, interacts with DnaA modulators region spans residues Met1–Lys73. The tract at residues Lys73–Asn113 is domain II. Residues Asn114–Ser330 form a domain III, AAA+ region region. 4 residues coordinate ATP: Gly158, Gly160, Lys161, and Thr162. Positions Ser331–Asp451 are domain IV, binds dsDNA.

The protein belongs to the DnaA family. As to quaternary structure, oligomerizes as a right-handed, spiral filament on DNA at oriC.

It is found in the cytoplasm. Its function is as follows. Plays an essential role in the initiation and regulation of chromosomal replication. ATP-DnaA binds to the origin of replication (oriC) to initiate formation of the DNA replication initiation complex once per cell cycle. Binds the DnaA box (a 9 base pair repeat at the origin) and separates the double-stranded (ds)DNA. Forms a right-handed helical filament on oriC DNA; dsDNA binds to the exterior of the filament while single-stranded (ss)DNA is stabiized in the filament's interior. The ATP-DnaA-oriC complex binds and stabilizes one strand of the AT-rich DNA unwinding element (DUE), permitting loading of DNA polymerase. After initiation quickly degrades to an ADP-DnaA complex that is not apt for DNA replication. Binds acidic phospholipids. This Alkaliphilus oremlandii (strain OhILAs) (Clostridium oremlandii (strain OhILAs)) protein is Chromosomal replication initiator protein DnaA.